The primary structure comprises 175 residues: Sialidase 85-1.3 (175 aa).

Belongs to the glycosyl hydrolase 33 family.

It carries out the reaction Hydrolysis of alpha-(2-&gt;3)-, alpha-(2-&gt;6)-, alpha-(2-&gt;8)- glycosidic linkages of terminal sialic acid residues in oligosaccharides, glycoproteins, glycolipids, colominic acid and synthetic substrates.. Its function is as follows. Developmentally regulated neuraminidase implicated in parasite invasion of cells. May contribute to the pathology during T.cruzi infection by cleaving sialic acid from cells of the immune system. This chain is Sialidase 85-1.3 (SA85-1.3), found in Trypanosoma cruzi.